The primary structure comprises 117 residues: Glycoprotein hormones alpha chain (117 aa).

The first 23 residues, 1 to 23, serve as a signal peptide directing secretion; that stretch reads MGSVKSAGLSLLLLSFLLYVADS. 5 disulfide bridges follow: C34–C57, C37–C86, C54–C107, C58–C109, and C85–C112. N-linked (GlcNAc...) asparagine glycosylation is found at N78 and N103.

This sequence belongs to the glycoprotein hormones subunit alpha family. As to quaternary structure, heterodimer. Glycoprotein hormones are heterodimers composed of a common alpha chain described here and a unique beta chain which confers their biological specificity to the different hormones.

Its subcellular location is the secreted. In terms of biological role, shared alpha chain of heterodimeric glycoprotein hormones. These hormones bind specific receptors on target cells that in turn activate downstream signaling pathways. Involved in gametogenesis and steroidogenesis. This Acanthopagrus latus (Yellowfin seabream) protein is Glycoprotein hormones alpha chain (cga).